Here is a 1504-residue protein sequence, read N- to C-terminus: Nischarin (1504 aa).

Ala-2 is subject to N-acetylalanine. The tract at residues 2-133 is necessary for binding to phosphoinositide-3-P; not sufficient for targeting to endosomes; sequence ATARTFGPER…GITAALAEEL (132 aa). Residues 11 to 121 form the PX domain; sequence REAEPAKEAR…AHFLHFHFYE (111 aa). A necessary for homooligomerization and targeting to endosomes region spans residues 120–695; it reads YEINGITAAL…ERLALEWALG (576 aa). The segment at 245–869 is interaction with PAK1; that stretch reads LSVRFSATSM…LVYSDKRMVQ (625 aa). LRR repeat units lie at residues 288–309, 311–332, 333–354, 356–377, 378–399, and 403–424; these read ALTTLDLSHNSVSEIDESVKLI, KIEFLDLSHNGLLVVDNLQHLY, NLVHLDLSYNKLSSLEGLHTKL, NIKTLNLAGNLLESLSGLHKLY, SLVNLDLRDNRIEQMEEVRSIG, and CLEHVSLLNNPLSIIPDYRTKV. A compositionally biased stretch (basic and acidic residues) spans 463–478; that stretch reads KSKLSNPEKKGGEDSR. 4 disordered regions span residues 463–501, 524–547, 554–573, and 628–687; these read KSKLSNPEKKGGEDSRLSAAPCIRPSSSPPTVAPASASL, SSTDSLTPEHQPIAQGCSDSLESI, SDDLRDVPGAVGGASPEHAE, and REEG…EEER. Ser-541, Ser-543, and Ser-546 each carry phosphoserine. Positions 634-695 form a coiled coil; the sequence is EQGEEEDEEE…ERLALEWALG (62 aa). Acidic residues-rich tracts occupy residues 635 to 649 and 661 to 685; these read QGEEEDEEEEEEEDV and DVEEEEGGGQGEEEEEEEEDEEAEE. The segment at 660 to 869 is interaction with LIMK; the sequence is PDVEEEEGGG…LVYSDKRMVQ (210 aa). Residues 709-807 are interaction with ITGA5; the sequence is KVLWCFLIHV…ANLHEFHADL (99 aa). A disordered region spans residues 1016–1104; sequence TPGTGGSPQG…PAPPPAEAPA (89 aa). Position 1022 is a phosphoserine (Ser-1022). The span at 1032–1043 shows a compositional bias: basic and acidic residues; sequence PAERRASNDQRP. Over residues 1063 to 1078 the composition is skewed to low complexity; it reads PAAASASGPAKTPAPA. A Phosphothreonine modification is found at Thr-1282. Ser-1284 bears the Phosphoserine mark.

As to quaternary structure, homooligomer. Interacts with GRB2. Interacts with PIK3R1; probably associates with the PI3-kinase complex. Interacts with IRS4. Found in a complex with ITGA5 and PAK1. Found in a complex with LIMK1 and PAK1. Interacts with ITGA5 (via cytoplasmic domain); this interaction is direct. Interacts with PAK1 (via kinase domain); this interaction is direct and is increased upon activation of PAK1. Interacts with LIMK1 (via PDZ and kinase domain); this interaction is direct. Interacts with LIMK2; this interaction depends on LIMK2 activity. Interacts with RAC1 (activated state). Interacts with STK11; this interaction may increase STK11 activity. As to expression, isoform 1, isoform 3 and isoform 4 are expressed in brain. Isoform 1 is expressed in endocrine tissues.

The protein localises to the cell membrane. The protein resides in the cytoplasm. It localises to the early endosome. It is found in the recycling endosome. In terms of biological role, acts either as the functional imidazoline-1 receptor (I1R) candidate or as a membrane-associated mediator of the I1R signaling. Binds numerous imidazoline ligands that induces initiation of cell-signaling cascades triggering to cell survival, growth and migration. Its activation by the agonist rilmenidine induces an increase in phosphorylation of mitogen-activated protein kinases MAPK1 and MAPK3 in rostral ventrolateral medulla (RVLM) neurons that exhibited rilmenidine-evoked hypotension. Blocking its activation with efaroxan abolished rilmenidine-induced mitogen-activated protein kinase phosphorylation in RVLM neurons. Acts as a modulator of Rac-regulated signal transduction pathways. Suppresses Rac1-stimulated cell migration by interacting with PAK1 and inhibiting its kinase activity. Also blocks Pak-independent Rac signaling by interacting with RAC1 and inhibiting Rac1-stimulated NF-kB response element and cyclin D1 promoter activation. Also inhibits LIMK1 kinase activity by reducing LIMK1 'Tyr-508' phosphorylation. Inhibits Rac-induced cell migration and invasion in breast and colon epithelial cells. Inhibits lamellipodia formation, when overexpressed. Plays a role in protection against apoptosis. Involved in association with IRS4 in the enhancement of insulin activation of MAPK1 and MAPK3. When overexpressed, induces a redistribution of cell surface ITGA5 integrin to intracellular endosomal structures. This Homo sapiens (Human) protein is Nischarin (NISCH).